We begin with the raw amino-acid sequence, 624 residues long: Ubiquilin-2 (624 aa).

Disordered regions lie at residues 1–32 (MAEN…EPKI) and 106–141 (NRPQ…TNSN). A2 carries the post-translational modification N-acetylalanine. The segment covering 15 to 32 (RGPAAAQGSAAAPAEPKI) has biased composition (low complexity). Residues 33-107 (IKVTVKTPKE…VHLVIKSQNR (75 aa)) form the Ubiquitin-like domain. Residues 106–115 (NRPQGQSTQP) are compositionally biased toward polar residues. Residues 116–141 (SNAAGTNTTSASTPRSNSTPISTNSN) are compositionally biased toward low complexity. STI1 domains follow at residues 178-206 (SPEM…QLIM) and 208-247 (NPQM…MQEM). The disordered stretch occupies residues 287–349 (FGGNPFASVG…SGSGNSSSNA (63 aa)). Over residues 294 to 304 (SVGSSSSSGEG) the composition is skewed to low complexity. A compositionally biased stretch (pro residues) spans 316–325 (LPNPWAPPPA). Positions 326-349 (TQSSATTSTTTSTGSGSGNSSSNA) are enriched in low complexity. STI1 domains lie at 379–426 (NPQL…QEQM) and 430–462 (LPAF…QQGL). 12 tandem repeats follow at residues 491-493 (PVG), 494-496 (PVT), 497-499 (PIG), 500-502 (PIG), 503-505 (PIV), 506-508 (PFT), 509-511 (PIG), 512-514 (PIG), 515-517 (PIG), 518-520 (PTG), 521-523 (PAA), and 524-526 (PPG). The 12 X 3 AA tandem repeats of P-X-X stretch occupies residues 491 to 526 (PVGPVTPIGPIGPIVPFTPIGPIGPIGPTGPAAPPG). The interval 512–556 (PIGPIGPTGPAAPPGSTGSGGPTGPTVSSAAPSETTSPTSESGPN) is disordered. Over residues 535–553 (GPTVSSAAPSETTSPTSES) the composition is skewed to low complexity. The region spanning 581–621 (RFQQQLEQLNAMGFLNREANLQALIATGGDINAAIERLLGS) is the UBA domain.

In terms of assembly, homodimer. Forms heterodimer with UBQLN1. Binds UBE3A and BTRC. Interacts with the 19S proteasome subunit. Interacts with C9orf72. Interacts with HNRNPA1 and HNRNPU. Found in a complex with UBQLN1 and MAP1LC3A/B/C. Interacts with EPS15, EPN1 and EPN2. Interacts with HERPUD1. Interacts with RAD23A. Interacts with TARDBP. Interacts (via C-terminus) with FAF2 (via N-terminus). Interacts with UBQLN4. Binds CD47. Degraded during macroautophagy.

Its subcellular location is the cytoplasm. It is found in the nucleus. It localises to the membrane. The protein localises to the cytoplasmic vesicle. The protein resides in the autophagosome. In terms of biological role, plays an important role in the regulation of different protein degradation mechanisms and pathways including ubiquitin-proteasome system (UPS), autophagy and the endoplasmic reticulum-associated protein degradation (ERAD) pathway. Mediates the proteasomal targeting of misfolded or accumulated proteins for degradation by binding (via UBA domain) to their polyubiquitin chains and by interacting (via ubiquitin-like domain) with the subunits of the proteasome. Plays a role in the ERAD pathway via its interaction with ER-localized proteins FAF2/UBXD8 and HERPUD1 and may form a link between the polyubiquitinated ERAD substrates and the proteasome. Involved in the regulation of macroautophagy and autophagosome formation; required for maturation of autophagy-related protein LC3 from the cytosolic form LC3-I to the membrane-bound form LC3-II and may assist in the maturation of autophagosomes to autolysosomes by mediating autophagosome-lysosome fusion. Negatively regulates the endocytosis of GPCR receptors: AVPR2 and ADRB2, by specifically reducing the rate at which receptor-arrestin complexes concentrate in clathrin-coated pits (CCPs). This chain is Ubiquilin-2 (UBQLN2), found in Homo sapiens (Human).